We begin with the raw amino-acid sequence, 327 residues long: Phenylalanine--tRNA ligase alpha subunit (327 aa).

Glu252 is a Mg(2+) binding site.

This sequence belongs to the class-II aminoacyl-tRNA synthetase family. Phe-tRNA synthetase alpha subunit type 1 subfamily. Tetramer of two alpha and two beta subunits. Mg(2+) is required as a cofactor.

It is found in the cytoplasm. It catalyses the reaction tRNA(Phe) + L-phenylalanine + ATP = L-phenylalanyl-tRNA(Phe) + AMP + diphosphate + H(+). This chain is Phenylalanine--tRNA ligase alpha subunit, found in Erwinia tasmaniensis (strain DSM 17950 / CFBP 7177 / CIP 109463 / NCPPB 4357 / Et1/99).